The sequence spans 125 residues: Small ribosomal subunit protein uS12 (125 aa).

The tract at residues 1-26 is disordered; sequence MPTINQLVRKSRKTVKAQSDSPALKN. Asp89 carries the 3-methylthioaspartic acid modification.

Belongs to the universal ribosomal protein uS12 family. In terms of assembly, part of the 30S ribosomal subunit. Contacts proteins S8 and S17. May interact with IF1 in the 30S initiation complex.

In terms of biological role, with S4 and S5 plays an important role in translational accuracy. Its function is as follows. Interacts with and stabilizes bases of the 16S rRNA that are involved in tRNA selection in the A site and with the mRNA backbone. Located at the interface of the 30S and 50S subunits, it traverses the body of the 30S subunit contacting proteins on the other side and probably holding the rRNA structure together. The combined cluster of proteins S8, S12 and S17 appears to hold together the shoulder and platform of the 30S subunit. This Clostridium tetani (strain Massachusetts / E88) protein is Small ribosomal subunit protein uS12.